A 1170-amino-acid polypeptide reads, in one-letter code: Thrombospondin-1 (1170 aa).

The first 18 residues, 1–18 (MGLAWGLGVLFLMHVCGT), serve as a signal peptide directing secretion. A heparin-binding region spans residues 47–95 (RLVKGPDPSSPAFRIEDANLIPPVPDDKFQDLVDAVRAEKGFLLLASLR). The region spanning 65 to 270 (NLIPPVPDDK…HKTKDLQAIC (206 aa)) is the Laminin G-like domain. Cys171 and Cys232 form a disulfide bridge. Residues Asn248 and Asn360 are each glycosylated (N-linked (GlcNAc...) asparagine). In terms of domain architecture, VWFC spans 316 to 373 (PLCYHNGVQYRNNEEWTVDSCTECHCQNSVTICKKVSCPIMPCSNATVPDGECCPRCW). 3 consecutive TSP type-1 domains span residues 379–429 (DDGW…QECD), 435–490 (DGGW…DACP), and 492–547 (NGGW…QDCP). A glycan (C-linked (Man) tryptophan) is linked at Trp385. Intrachain disulfides connect Cys391-Cys423, Cys395-Cys428, and Cys406-Cys413. Ser394 carries O-linked (Fuc...) serine glycosylation. C-linked (Man) tryptophan glycosylation is found at Trp438 and Trp441. 3 cysteine pairs are disulfide-bonded: Cys447-Cys484, Cys451-Cys489, and Cys462-Cys474. Thr450 carries an O-linked (Fuc...) threonine glycan. Trp498 carries a C-linked (Man) tryptophan glycan. Intrachain disulfides connect Cys504–Cys541, Cys508–Cys546, Cys519–Cys531, Cys551–Cys562, Cys556–Cys572, Cys575–Cys586, Cys592–Cys608, Cys599–Cys617, Cys620–Cys644, Cys650–Cys663, Cys657–Cys676, Cys678–Cys689, Cys705–Cys713, Cys718–Cys738, Cys754–Cys774, Cys777–Cys797, Cys813–Cys833, Cys836–Cys856, Cys874–Cys894, Cys910–Cys930, and Cys946–Cys1167. Thr507 carries O-linked (Fuc...) threonine glycosylation. Residues 531–1152 (CVGDVTENQI…YAGGRLGLFV (622 aa)) are involved in retention in extracellular matrix (ECM); involved in trimer formation. The EGF-like 1 domain maps to 547 to 587 (PIDGCLSNPCFAGVKCTSYPDGSWKCGACPPGYSGNGIQCT). Ser553 is a glycosylation site (O-linked (Xyl) serine). The region spanning 646 to 690 (PRNPCTDGTHDCNKNAKCNYLGHYSDPMYRCECKPGYAGNGIICG) is the EGF-like 2 domain. TSP type-3 repeat units follow at residues 691–726 (EDTD…NSGQ), 727–762 (EDYD…NPAQ), 763–785 (YDYD…NPDQ), 786–821 (ADTD…NVDQ), 822–844 (RDTD…NPDQ), 845–882 (LDSD…NANQ), 883–918 (ADHD…NPDQ), and 919–954 (KDSD…DISE). A glycan (N-linked (GlcNAc...) asparagine) is linked at Asn708. A disordered region spans residues 839–934 (EHNPDQLDSD…GRGDACKDDF (96 aa)). Composition is skewed to basic and acidic residues over residues 840–854 (HNPD…RIGD), 883–894 (ADHDKDGKGDAC), and 917–934 (DQKD…KDDF). A Cell attachment site motif is present at residues 926 to 928 (RGD). Residues 958-1170 (RRFQMIPLDP…SDLKYECRDP (213 aa)) form the TSP C-terminal domain. The N-linked (GlcNAc...) asparagine glycan is linked to Asn1067.

The protein belongs to the thrombospondin family. Homotrimer; disulfide-linked. Can bind to fibrinogen, fibronectin, laminin, type V collagen and integrins alpha-V/beta-1, alpha-V/beta-3 and alpha-IIb/beta-3. Binds heparin. Interacts (via the C-terminal domain) with CD47. Interacts (via the TSP type I repeats) with CD36; the interaction conveys an antiangiogenic effect. Interacts (via the TSP type I repeats) with HRG; the interaction blocks the antiangiogenic effect of THBS1 with CD36. Interacts with ATF6 (via lumenal domain). Interacts with FN1; this interaction is enhanced by TNFAIP6, which may act as a bridging molecule between FN1 and THBS1. Interacts with SIRPA; the interaction stimulates phosphorylation of SIRPA. Expressed by platelets (at protein level). Expressed by monocyte-derived immature and mature dendritic cells (at protein level).

The protein resides in the secreted. Its subcellular location is the cell surface. It is found in the extracellular space. It localises to the extracellular matrix. The protein localises to the endoplasmic reticulum. The protein resides in the sarcoplasmic reticulum. Its function is as follows. Adhesive glycoprotein that mediates cell-to-cell and cell-to-matrix interactions. Multifunctional, involved in inflammation, angiogenesis, wound healing, reactive oxygen species (ROS) signaling, nitrous oxide (NO) signaling, apoptosis, senescence, aging, cellular self-renewal, stemness, and cardiovascular and metabolic homeostasis. Negatively modulates dendritic cell activation and cytokine release, as part of an autocrine feedback loop, contributing to the resolution of inflammation and immune homeostasis. Ligand for receptor CD47. Modulates nitrous oxide (NO) signaling via CD47, hence playing a role as a pressor agent, supporting blood pressure. Plays a role in endothelial cell senescence, acting via CD47, by increasing the abundance and activation of NADPH oxidase NOX1, and so generating excess ROS. Inhibits stem cell self-renewal, acting via CD47 signaling, probably by regulation of the stem cell transcription factors POU5F1/OCT4, SOX2, MYC/c-Myc and KLF4. Negatively modulates wound healing, acting via CD47. Ligand for receptor CD36. Involved in inducing apoptosis in podocytes in response to elevated free fatty acids, acting via CD36. Plays a role in suppressing angiogenesis, acting, depending on context, via CD36 or CD47. Promotes cellular senescence in a TP53-CDKN1A-RB1 signaling-dependent manner. Ligand for immunoglobulin-like cell surface receptor SIRPA. Involved in ROS signaling in non-phagocytic cells, stimulating NADPH oxidase-derived ROS production, acting via interaction with SIRPA. Plays a role in metabolic dysfunction in diet-induced obesity, perhaps acting by exacerbating adipose inflammatory activity; its effects may be mediated, at least in part, through enhanced adipocyte proliferation. Plays a role in ER stress response, via its interaction with the activating transcription factor 6 alpha (ATF6) which produces adaptive ER stress response factors. May be involved in age-related conditions, including metabolic dysregulation, during normal aging. The polypeptide is Thrombospondin-1 (Homo sapiens (Human)).